We begin with the raw amino-acid sequence, 1087 residues long: Error-prone DNA polymerase 2 (1087 aa).

Residues Asp1033 to Val1064 are disordered.

It belongs to the DNA polymerase type-C family. DnaE2 subfamily.

The protein resides in the cytoplasm. The catalysed reaction is DNA(n) + a 2'-deoxyribonucleoside 5'-triphosphate = DNA(n+1) + diphosphate. DNA polymerase involved in damage-induced mutagenesis and translesion synthesis (TLS). It is not the major replicative DNA polymerase. The protein is Error-prone DNA polymerase 2 of Rhizobium meliloti (strain 1021) (Ensifer meliloti).